A 181-amino-acid polypeptide reads, in one-letter code: Protein Syd (181 aa).

This sequence belongs to the Syd family.

It is found in the cell inner membrane. Functionally, interacts with the SecY protein in vivo. May bind preferentially to an uncomplexed state of SecY, thus functioning either as a chelating agent for excess SecY in the cell or as a regulatory factor that negatively controls the translocase function. In Enterobacter sp. (strain 638), this protein is Protein Syd.